A 376-amino-acid chain; its full sequence is Chaperone protein DnaJ (376 aa).

A J domain is found at 5-70 (DYYEVLGVAK…QKRAAYDQYG (66 aa)). A CR-type zinc finger spans residues 136 to 214 (GYDTQIRVPS…CHGSGKVKET (79 aa)). 8 residues coordinate Zn(2+): Cys149, Cys152, Cys166, Cys169, Cys188, Cys191, Cys202, and Cys205. CXXCXGXG motif repeat units follow at residues 149-156 (CGICHGSG), 166-173 (CPTCHGQG), 188-195 (CPKCHGTG), and 202-209 (CVHCHGSG).

Belongs to the DnaJ family. Homodimer. Zn(2+) is required as a cofactor.

Its subcellular location is the cytoplasm. In terms of biological role, participates actively in the response to hyperosmotic and heat shock by preventing the aggregation of stress-denatured proteins and by disaggregating proteins, also in an autonomous, DnaK-independent fashion. Unfolded proteins bind initially to DnaJ; upon interaction with the DnaJ-bound protein, DnaK hydrolyzes its bound ATP, resulting in the formation of a stable complex. GrpE releases ADP from DnaK; ATP binding to DnaK triggers the release of the substrate protein, thus completing the reaction cycle. Several rounds of ATP-dependent interactions between DnaJ, DnaK and GrpE are required for fully efficient folding. Also involved, together with DnaK and GrpE, in the DNA replication of plasmids through activation of initiation proteins. The protein is Chaperone protein DnaJ of Burkholderia thailandensis (strain ATCC 700388 / DSM 13276 / CCUG 48851 / CIP 106301 / E264).